The sequence spans 331 residues: NADH-quinone oxidoreductase subunit H 2 (331 aa).

Transmembrane regions (helical) follow at residues 6–26 (AGFL…LLVA), 79–99 (IFML…AVIP), 120–140 (VGLL…ALGG), 155–175 (GAAQ…PVVM), 193–213 (PFIL…MAEI), 242–262 (LFFL…AVLF), 271–291 (LPPV…MIWV), and 310–330 (VLIP…LWMG).

It belongs to the complex I subunit 1 family. NDH-1 is composed of 14 different subunits. Subunits NuoA, H, J, K, L, M, N constitute the membrane sector of the complex.

The protein resides in the cell inner membrane. It catalyses the reaction a quinone + NADH + 5 H(+)(in) = a quinol + NAD(+) + 4 H(+)(out). Functionally, NDH-1 shuttles electrons from NADH, via FMN and iron-sulfur (Fe-S) centers, to quinones in the respiratory chain. The immediate electron acceptor for the enzyme in this species is believed to be ubiquinone. Couples the redox reaction to proton translocation (for every two electrons transferred, four hydrogen ions are translocated across the cytoplasmic membrane), and thus conserves the redox energy in a proton gradient. This subunit may bind ubiquinone. The chain is NADH-quinone oxidoreductase subunit H 2 from Syntrophobacter fumaroxidans (strain DSM 10017 / MPOB).